Consider the following 64-residue polypeptide: Conotoxin Pu3.4 (64 aa).

The signal sequence occupies residues 1 to 16 (LGVLLPICLLLFPLTA). Positions 17–49 (LPLDGDQPADRPAERMQDDFITEQHPLFDPVKR) are excised as a propeptide. 3 cysteine pairs are disulfide-bonded: cysteine 50–cysteine 63, cysteine 51–cysteine 59, and cysteine 55–cysteine 62. Proline 61 bears the 4-hydroxyproline mark.

The protein belongs to the conotoxin M superfamily. As to expression, expressed by the venom duct.

It is found in the secreted. This Conus pulicarius (Flea-bitten cone) protein is Conotoxin Pu3.4.